A 662-amino-acid chain; its full sequence is Probable quinol oxidase subunit 1 (662 aa).

2 helical membrane passes run 14 to 34 (WMII…IAVI) and 56 to 76 (IGIM…IDAL). His-102 contacts Fe(II)-heme a. Helical transmembrane passes span 103 to 123 (GVIM…NVVI), 140 to 160 (VSFW…IVGG), 187 to 207 (IAIQ…FVTI), 228 to 248 (FITT…LALM), 273 to 293 (FFWV…FGMY), 311 to 331 (MIWA…HHFF), 336 to 356 (GALI…PTGV), and 376 to 396 (MLFS…GVML). Positions 279, 283, 328, and 329 each coordinate Cu cation. Positions 279 to 283 (HPEVY) form a cross-link, 1'-histidyl-3'-tyrosine (His-Tyr). His-414 contributes to the heme a3 binding site. 5 helical membrane-spanning segments follow: residues 415 to 435 (FHYT…IFWY), 451 to 471 (CFWF…ILGL), 492 to 512 (FIST…VASI), 587 to 604 (PVGF…FFLI), and 608 to 627 (IVPA…WRSF). Residue His-416 coordinates Fe(II)-heme a.

The protein belongs to the heme-copper respiratory oxidase family. Cu cation is required as a cofactor. The cofactor is ferriheme a. Requires Heme A3. as cofactor.

The protein localises to the cell membrane. The catalysed reaction is 2 a quinol + O2 = 2 a quinone + 2 H2O. The protein operates within energy metabolism; oxidative phosphorylation. Functionally, catalyzes quinol oxidation with the concomitant reduction of oxygen to water. This is Probable quinol oxidase subunit 1 (qoxB) from Staphylococcus epidermidis (strain ATCC 35984 / DSM 28319 / BCRC 17069 / CCUG 31568 / BM 3577 / RP62A).